The sequence spans 1185 residues: Mucin-6 (1185 aa).

2 cysteine pairs are disulfide-bonded: Cys-1–Cys-132 and Cys-23–Cys-168. One can recognise a VWFD 1 domain in the interval 1–169 (CSTWGGGHFS…KMDDPSEICL (169 aa)). Asn-223 carries N-linked (GlcNAc...) (complex) asparagine glycosylation. In terms of domain architecture, TIL 1 spans 257-312 (CSANQIYEECGSPCIKTCSNPEYSCSSHCTYGCFCPEGTVLDDISKNRTCVHLEQC). Positions 350-534 (GRCSLEGGSF…AMERETDPCA (185 aa)) constitute a VWFD 2 domain. 2 disulfides stabilise this stretch: Cys-352/Cys-488 and Cys-374/Cys-533. TIL domains follow at residues 619-676 (CTGN…KSHC) and 737-782 (GATC…PEEC). One can recognise a VWFD 3 domain in the interval 821 to 993 (STCNLYGEGH…NSWKENPLCG (173 aa)). 4 cysteine pairs are disulfide-bonded: Cys-823–Cys-957, Cys-845–Cys-992, Cys-854–Cys-954, and Cys-872–Cys-879. Asn-930 carries an N-linked (GlcNAc...) (complex) asparagine glycan. A compositionally biased stretch (low complexity) spans 1160–1178 (PTATQPTSPSTSSASTVLT). The interval 1160 to 1185 (PTATQPTSPSTSSASTVLTETTNPPV) is disordered.

In terms of assembly, multimer; disulfide-linked. N-glycosylated with N-acetylglucosamine (6.7%), N-acetylgalactosamine (0.6%), galactose (1.8%), mannose (4.6%), N-acetylneuraminic acid (1.0%) and sulfate-containing glycans (0.7%).

The protein resides in the secreted. In terms of biological role, ovomucin, the glycoprotein responsible for the gel properties of egg white, is composed for 2 subunits, alpha-ovomucin/MUC5B and beta-ovomucin/MUC6. This chain is Mucin-6 (MUC6), found in Gallus gallus (Chicken).